Consider the following 96-residue polypeptide: Nucleoid-associated protein CT_335 (96 aa).

The protein belongs to the YbaB/EbfC family. In terms of assembly, homodimer.

It is found in the cytoplasm. The protein resides in the nucleoid. In terms of biological role, binds to DNA and alters its conformation. May be involved in regulation of gene expression, nucleoid organization and DNA protection. This chain is Nucleoid-associated protein CT_335, found in Chlamydia trachomatis serovar D (strain ATCC VR-885 / DSM 19411 / UW-3/Cx).